The chain runs to 520 residues: Beta-2-syntrophin (520 aa).

Positions 45–95 (EPPAAAFNGLPNGGGGESLPGSPNRGLGPPSPPAPPRGPAGEASASPPVRR) are disordered. Positions 63 to 72 (LPGSPNRGLG) are enriched in low complexity. The span at 73–82 (PPSPPAPPRG) shows a compositional bias: pro residues. A phosphoserine mark is found at Ser-75, Ser-90, Ser-109, Ser-191, Ser-202, Ser-213, Ser-373, and Ser-375. The segment covering 83-93 (PAGEASASPPV) has biased composition (low complexity). The PDZ domain maps to 95–178 (RVRVVKQEAG…EVLLEVKFIR (84 aa)). PH domains follow at residues 143-280 (ILSV…TNIM) and 305-417 (EVKH…QGCH). Residues 195 to 220 (WEGASPQSPSFSGSEDSGSPKHQNTT) are disordered. A compositionally biased stretch (low complexity) spans 197–211 (GASPQSPSFSGSEDS). The SU domain occupies 464-520 (PFERLKMSADDGIRNLYLDFGGPEGELTMDLHSCPKPIVFVLHTFLSAKVTRMGLLV). The interval 498 to 520 (PKPIVFVLHTFLSAKVTRMGLLV) is calmodulin-binding.

The protein belongs to the syntrophin family. In terms of assembly, monomer and homodimer. Interacts with the dystrophin protein DMD and related protein DTNA; and with the other members of the syntrophin family: SNTA1 and SNTB1. Interacts with the neuroregulin receptor ERBB4. Interacts with PTPRN when phosphorylated, protecting PTPRN from protein cleavage by CAPN1. Dephosphorylation upon insulin stimulation disrupts the interaction with PTPRN and results in the cleavage of PTPRN. Interacts with the sodium channel proteins SCN4A and SCN5A. Interacts with SAST, MAST205, microtubules and microtubule-associated proteins. Interacts with the dystrophin related protein UTRN. Interacts with DTNB. In terms of processing, phosphorylated. Partially dephosphorylated upon insulin stimulation. In terms of tissue distribution, ubiquitous. Expressed at high levels in the testis.

Its subcellular location is the membrane. The protein resides in the cytoplasmic vesicle. The protein localises to the secretory vesicle membrane. It is found in the cell junction. It localises to the cytoplasm. Its subcellular location is the cytoskeleton. Adapter protein that binds to and probably organizes the subcellular localization of a variety of membrane proteins. May link various receptors to the actin cytoskeleton and the dystrophin glycoprotein complex. May play a role in the regulation of secretory granules via its interaction with PTPRN. This is Beta-2-syntrophin (Sntb2) from Mus musculus (Mouse).